A 255-amino-acid polypeptide reads, in one-letter code: 4-hydroxy-tetrahydrodipicolinate reductase (255 aa).

NAD(+) is bound by residues 9-14, 89-91, and 115-118; these read GFKGRM, GTT, and APNF. The Proton donor/acceptor role is filled by His145. His146 is a binding site for (S)-2,3,4,5-tetrahydrodipicolinate. Lys149 serves as the catalytic Proton donor. 155–156 serves as a coordination point for (S)-2,3,4,5-tetrahydrodipicolinate; that stretch reads GT.

The protein belongs to the DapB family.

Its subcellular location is the cytoplasm. It catalyses the reaction (S)-2,3,4,5-tetrahydrodipicolinate + NAD(+) + H2O = (2S,4S)-4-hydroxy-2,3,4,5-tetrahydrodipicolinate + NADH + H(+). It carries out the reaction (S)-2,3,4,5-tetrahydrodipicolinate + NADP(+) + H2O = (2S,4S)-4-hydroxy-2,3,4,5-tetrahydrodipicolinate + NADPH + H(+). Its pathway is amino-acid biosynthesis; L-lysine biosynthesis via DAP pathway; (S)-tetrahydrodipicolinate from L-aspartate: step 4/4. Catalyzes the conversion of 4-hydroxy-tetrahydrodipicolinate (HTPA) to tetrahydrodipicolinate. The polypeptide is 4-hydroxy-tetrahydrodipicolinate reductase (Streptococcus thermophilus (strain CNRZ 1066)).